The primary structure comprises 369 residues: S-adenosylmethionine decarboxylase proenzyme 2 (369 aa).

Catalysis depends on residues glutamate 9 and glutamate 12. Serine 69 serves as the catalytic Schiff-base intermediate with substrate; via pyruvic acid. Position 69 is a pyruvic acid (Ser); by autocatalysis (serine 69). Cysteine 83 acts as the Proton donor; for catalytic activity in catalysis. Catalysis depends on proton acceptor; for processing activity residues serine 236 and histidine 249.

It belongs to the eukaryotic AdoMetDC family. It depends on pyruvate as a cofactor. In terms of processing, is synthesized initially as an inactive proenzyme. Formation of the active enzyme involves a self-maturation process in which the active site pyruvoyl group is generated from an internal serine residue via an autocatalytic post-translational modification. Two non-identical subunits are generated from the proenzyme in this reaction, and the pyruvate is formed at the N-terminus of the alpha chain, which is derived from the carboxyl end of the proenzyme. The post-translation cleavage follows an unusual pathway, termed non-hydrolytic serinolysis, in which the side chain hydroxyl group of the serine supplies its oxygen atom to form the C-terminus of the beta chain, while the remainder of the serine residue undergoes an oxidative deamination to produce ammonia and the pyruvoyl group blocking the N-terminus of the alpha chain.

It catalyses the reaction S-adenosyl-L-methionine + H(+) = S-adenosyl 3-(methylsulfanyl)propylamine + CO2. The protein operates within amine and polyamine biosynthesis; S-adenosylmethioninamine biosynthesis; S-adenosylmethioninamine from S-adenosyl-L-methionine: step 1/1. The chain is S-adenosylmethionine decarboxylase proenzyme 2 (SAMDC2) from Brassica juncea (Indian mustard).